Reading from the N-terminus, the 429-residue chain is Enolase (429 aa).

Gln162 is a (2R)-2-phosphoglycerate binding site. Glu204 functions as the Proton donor in the catalytic mechanism. Mg(2+)-binding residues include Asp241, Glu283, and Asp310. (2R)-2-phosphoglycerate contacts are provided by Lys335, Arg364, Ser365, and Lys386. Lys335 serves as the catalytic Proton acceptor.

Belongs to the enolase family. It depends on Mg(2+) as a cofactor.

Its subcellular location is the cytoplasm. The protein localises to the secreted. It is found in the cell surface. It carries out the reaction (2R)-2-phosphoglycerate = phosphoenolpyruvate + H2O. The protein operates within carbohydrate degradation; glycolysis; pyruvate from D-glyceraldehyde 3-phosphate: step 4/5. Functionally, catalyzes the reversible conversion of 2-phosphoglycerate (2-PG) into phosphoenolpyruvate (PEP). It is essential for the degradation of carbohydrates via glycolysis. The protein is Enolase of Mycobacterium avium (strain 104).